We begin with the raw amino-acid sequence, 54 residues long: Large ribosomal subunit protein bL33 (54 aa).

It belongs to the bacterial ribosomal protein bL33 family.

The chain is Large ribosomal subunit protein bL33 from Buchnera aphidicola subsp. Cinara cedri (strain Cc).